We begin with the raw amino-acid sequence, 409 residues long: Glucose-1-phosphate adenylyltransferase (409 aa).

Residues Gly168, 183-184 (EK), and Ser201 contribute to the alpha-D-glucose 1-phosphate site.

It belongs to the bacterial/plant glucose-1-phosphate adenylyltransferase family. As to quaternary structure, homotetramer.

The enzyme catalyses alpha-D-glucose 1-phosphate + ATP + H(+) = ADP-alpha-D-glucose + diphosphate. It functions in the pathway glycan biosynthesis; glycogen biosynthesis. Involved in the biosynthesis of ADP-glucose, a building block required for the elongation reactions to produce glycogen. Catalyzes the reaction between ATP and alpha-D-glucose 1-phosphate (G1P) to produce pyrophosphate and ADP-Glc. The chain is Glucose-1-phosphate adenylyltransferase from Corynebacterium glutamicum (strain R).